Here is a 284-residue protein sequence, read N- to C-terminus: 2-dehydro-3-deoxyphosphooctonate aldolase (284 aa).

This sequence belongs to the KdsA family.

The protein localises to the cytoplasm. The catalysed reaction is D-arabinose 5-phosphate + phosphoenolpyruvate + H2O = 3-deoxy-alpha-D-manno-2-octulosonate-8-phosphate + phosphate. It functions in the pathway carbohydrate biosynthesis; 3-deoxy-D-manno-octulosonate biosynthesis; 3-deoxy-D-manno-octulosonate from D-ribulose 5-phosphate: step 2/3. It participates in bacterial outer membrane biogenesis; lipopolysaccharide biosynthesis. This Vibrio atlanticus (strain LGP32) (Vibrio splendidus (strain Mel32)) protein is 2-dehydro-3-deoxyphosphooctonate aldolase.